The sequence spans 285 residues: Golgi to ER traffic protein 2 (285 aa).

Basic and acidic residues predominate over residues 1-10 (MSELTEAEKR). 2 disordered regions span residues 1–72 (MSEL…KEDS) and 87–106 (MQGQ…PDLL). An N-acetylserine modification is found at Ser-2. The Cytoplasmic portion of the chain corresponds to 2 to 148 (SELTEAEKRR…LDYHDYLLNR (147 aa)). The segment covering 11–20 (RLLRERRQKK) has biased composition (basic residues). Residues 24–42 (GGASSRLNKITGQASSHLN) show a composition bias toward polar residues. A Phosphoserine modification is found at Ser-45. Over residues 49-60 (APSAAKTTPPAS) the composition is skewed to low complexity. Residues 93-104 (GKSTPQDSSTPD) show a composition bias toward polar residues. Residues 149 to 169 (LKAWTILVKWVFFLLPYLYLI) traverse the membrane as a helical segment. Residues 170-196 (TRPNSSVWPAYAFTQSAWFAPLRNPSN) are Lumenal-facing. Residues Asn-173 and Asn-196 are each glycosylated (N-linked (GlcNAc...) asparagine). A helical transmembrane segment spans residues 197-216 (FTRIFATFEFLSISIYYQLL). The Cytoplasmic segment spans residues 217-263 (KNVEHKSKIKNLQDTNKLVKLVSLVPEGVIPVANLKGKLITLLQYWD). Residues 264 to 284 (LLSMLITDISFVLIVLGLLTY) form a helical membrane-spanning segment. Residue Leu-285 is a topological domain, lumenal.

This sequence belongs to the GET2 family. In terms of assembly, component of the Golgi to ER traffic (GET) complex, which is composed of GET1, GET2 and GET3. Within the complex, GET1 and GET2 form a heterotetramer which is stabilized by phosphatidylinositol binding and which binds to the GET3 homodimer.

It is found in the endoplasmic reticulum membrane. The protein resides in the golgi apparatus membrane. Its function is as follows. Required for the post-translational delivery of tail-anchored (TA) proteins to the endoplasmic reticulum. Together with GET1, acts as a membrane receptor for soluble GET3, which recognizes and selectively binds the transmembrane domain of TA proteins in the cytosol. The GET complex cooperates with the HDEL receptor ERD2 to mediate the ATP-dependent retrieval of resident ER proteins that contain a C-terminal H-D-E-L retention signal from the Golgi to the ER. Involved in DNA replication and DNA damage response and also in cell wall function. The polypeptide is Golgi to ER traffic protein 2 (Saccharomyces cerevisiae (strain RM11-1a) (Baker's yeast)).